We begin with the raw amino-acid sequence, 549 residues long: MEADFVIIGSGSAGSAMAYRLSEDGRYSVIVIEYGVPDVGPLIQMPAALSFPMNMETYDWGFSTEPEPHIGGRSLVTPRGKVLGGSSSINGMVYVRGHARDYDHWSESGARGWAYADVLPYFKRMENSSGGQEGWRGTNGPLYIQRGKRDNPLFHAFVEAGHEAGFEVTEDYNGEKQEGFGPMEQTIHNGRRWSAANAYLKPALKRPNVKLVKGLARKIVLEGKRAVGVEIEAGRSFSTIRARREVIIAASSINSPKLLMLSGIGPAAQLKEHGIEVVADRPGVGQNLQDHLEVYIQQECTQPITLYSKLNLFSKAKIGAEWLFFKTGDGATNHFESAAFLRSKAGVEYPDIQYHFLPVAIRYDGKAAAQSHGFQAHVGPMRSKSRGSVTLRSANPREKPVIKFNYMSHEDDWADFRHCVRLTREIFGQAAFNPYRGAEIQPGAHVQSDDEIDNFIKEHVESAFHPCGTCKMGAVDDPMAVVDAECRVIGVEGLRVADSSIFPRITNGNLNGPSIMVGEKASDHILGRTPLARSDQEPWINPRWQVSDR.

4–33 provides a ligand contact to FAD; sequence DFVIIGSGSAGSAMAYRLSEDGRYSVIVIE. Histidine 465 (proton acceptor) is an active-site residue.

It belongs to the GMC oxidoreductase family. It depends on FAD as a cofactor.

The enzyme catalyses choline + A = betaine aldehyde + AH2. The catalysed reaction is betaine aldehyde + NAD(+) + H2O = glycine betaine + NADH + 2 H(+). It participates in amine and polyamine biosynthesis; betaine biosynthesis via choline pathway; betaine aldehyde from choline (cytochrome c reductase route): step 1/1. Its function is as follows. Involved in the biosynthesis of the osmoprotectant glycine betaine. Catalyzes the oxidation of choline to betaine aldehyde and betaine aldehyde to glycine betaine at the same rate. In Brucella anthropi (strain ATCC 49188 / DSM 6882 / CCUG 24695 / JCM 21032 / LMG 3331 / NBRC 15819 / NCTC 12168 / Alc 37) (Ochrobactrum anthropi), this protein is Oxygen-dependent choline dehydrogenase.